Consider the following 281-residue polypeptide: Ribosomal protein L11 methyltransferase (281 aa).

4 residues coordinate S-adenosyl-L-methionine: T131, G152, D174, and N217.

The protein belongs to the methyltransferase superfamily. PrmA family.

The protein resides in the cytoplasm. It catalyses the reaction L-lysyl-[protein] + 3 S-adenosyl-L-methionine = N(6),N(6),N(6)-trimethyl-L-lysyl-[protein] + 3 S-adenosyl-L-homocysteine + 3 H(+). In terms of biological role, methylates ribosomal protein L11. The protein is Ribosomal protein L11 methyltransferase of Phocaeicola vulgatus (strain ATCC 8482 / DSM 1447 / JCM 5826 / CCUG 4940 / NBRC 14291 / NCTC 11154) (Bacteroides vulgatus).